The chain runs to 218 residues: Stress response regulator protein 1 (218 aa).

Positions 90 to 209 (RFLLVDDNSI…YRVVLDVVDN (120 aa)) constitute a Response regulatory domain. The residue at position 142 (D142) is a 4-aspartylphosphate.

In terms of biological role, required for stress adaptation, morphogenesis and virulence. The protein is Stress response regulator protein 1 (SRR1) of Meyerozyma guilliermondii (strain ATCC 6260 / CBS 566 / DSM 6381 / JCM 1539 / NBRC 10279 / NRRL Y-324) (Yeast).